The primary structure comprises 245 residues: Type III pantothenate kinase (245 aa).

An ATP-binding site is contributed by 6–13 (DQGNTILK). Substrate contacts are provided by residues tyrosine 86 and 93 to 96 (GTDR). Aspartate 95 acts as the Proton acceptor in catalysis. K(+) is bound at residue aspartate 116. Residue threonine 119 coordinates ATP. Position 171 (threonine 171) interacts with substrate.

This sequence belongs to the type III pantothenate kinase family. Homodimer. NH4(+) is required as a cofactor. The cofactor is K(+).

The protein localises to the cytoplasm. It carries out the reaction (R)-pantothenate + ATP = (R)-4'-phosphopantothenate + ADP + H(+). Its pathway is cofactor biosynthesis; coenzyme A biosynthesis; CoA from (R)-pantothenate: step 1/5. Catalyzes the phosphorylation of pantothenate (Pan), the first step in CoA biosynthesis. The sequence is that of Type III pantothenate kinase from Azobacteroides pseudotrichonymphae genomovar. CFP2.